A 146-amino-acid polypeptide reads, in one-letter code: Mu-like prophage FluMu G protein 1 (146 aa).

It to phage Mu protein G.

This chain is Mu-like prophage FluMu G protein 1, found in Haemophilus influenzae (strain ATCC 51907 / DSM 11121 / KW20 / Rd).